We begin with the raw amino-acid sequence, 578 residues long: Protein BONZAI 1 (578 aa).

Gly2 carries the N-myristoyl glycine lipid modification. 2 consecutive C2 domains span residues 26–163 (ALGA…TSTL) and 176–303 (QPHH…NFSL). The Ca(2+) site is built by Asp63, Asp69, Asp122, and Asp124. In terms of domain architecture, VWFA spans 341 to 560 (NFMVAIDFTA…SVVQALLAEL (220 aa)).

It belongs to the copine family. As to quaternary structure, interacts (via VWA domain) with BAP1 and BAP2. Interacts with HSP70-1 and HSP70-2. The cofactor is Ca(2+). Based on mass spectrometry analysis, the N-peptide must be modified and there might be additional modifications other than myristoylation. Expressed in roots and flowers and, at higher levels, in leaves and stems. Strongly expressed in growing tissues. Not detected in green siliques.

Its subcellular location is the cell membrane. Functionally, negative regulator of cell death and defense responses. Negative regulator of several R genes, including SNC1. May have effects in promoting growth and development. May function in membrane trafficking and in fusion of vesicles with plasma membrane at low temperature. Exhibits calcium-dependent phospholipid binding properties. The protein is Protein BONZAI 1 (BON1) of Arabidopsis thaliana (Mouse-ear cress).